The primary structure comprises 335 residues: Beta-hexosaminidase (335 aa).

Substrate contacts are provided by residues D60, R68, R133, and 163–164; that span reads KH. H176 (proton donor/acceptor) is an active-site residue. Residue D247 is the Nucleophile of the active site.

This sequence belongs to the glycosyl hydrolase 3 family. NagZ subfamily.

It is found in the cytoplasm. It catalyses the reaction Hydrolysis of terminal non-reducing N-acetyl-D-hexosamine residues in N-acetyl-beta-D-hexosaminides.. The protein operates within cell wall biogenesis; peptidoglycan recycling. Its function is as follows. Plays a role in peptidoglycan recycling by cleaving the terminal beta-1,4-linked N-acetylglucosamine (GlcNAc) from peptide-linked peptidoglycan fragments, giving rise to free GlcNAc, anhydro-N-acetylmuramic acid and anhydro-N-acetylmuramic acid-linked peptides. In Xylella fastidiosa (strain M12), this protein is Beta-hexosaminidase.